Consider the following 222-residue polypeptide: Ubiquitin-conjugating enzyme E2 S (222 aa).

N-acetylmethionine is present on methionine 1. Residues 11–157 (HIIRLVYKEV…ARLLTEIHGG (147 aa)) enclose the UBC core domain. Cysteine 95 acts as the Glycyl thioester intermediate in catalysis. A disordered region spans residues 156–222 (GGAGGPSGRA…TDKKRALRRL (67 aa)). A Phosphoserine modification is found at serine 173. Over residues 208 to 222 (AAKKKTDKKRALRRL) the composition is skewed to basic residues.

This sequence belongs to the ubiquitin-conjugating enzyme family. Component of the APC/C complex, composed of at least 14 distinct subunits that assemble into a complex of at least 19 chains with a combined molecular mass of around 1.2 MDa. Within this complex, directly interacts with ANAPC2 and ANAPC4. Interacts with CDC20, FZR1/CDH1 and VHL. In terms of processing, autoubiquitinated by the APC/C complex during G1, leading to its degradation by the proteasome.

The enzyme catalyses S-ubiquitinyl-[E1 ubiquitin-activating enzyme]-L-cysteine + [E2 ubiquitin-conjugating enzyme]-L-cysteine = [E1 ubiquitin-activating enzyme]-L-cysteine + S-ubiquitinyl-[E2 ubiquitin-conjugating enzyme]-L-cysteine.. Its pathway is protein modification; protein ubiquitination. Functionally, accepts ubiquitin from the E1 complex and catalyzes its covalent attachment to other proteins. Catalyzes 'Lys-11'-linked polyubiquitination. Acts as an essential factor of the anaphase promoting complex/cyclosome (APC/C), a cell cycle-regulated ubiquitin ligase that controls progression through mitosis. Acts by specifically elongating 'Lys-11'-linked polyubiquitin chains initiated by the E2 enzyme UBE2C/UBCH10 on APC/C substrates, enhancing the degradation of APC/C substrates by the proteasome and promoting mitotic exit. Also acts by elongating ubiquitin chains initiated by the E2 enzyme UBE2D1/UBCH5 in vitro; it is however unclear whether UBE2D1/UBCH5 acts as an E2 enzyme for the APC/C in vivo. Also involved in ubiquitination and subsequent degradation of VHL, resulting in an accumulation of HIF1A. In vitro able to promote polyubiquitination using all 7 ubiquitin Lys residues, except 'Lys-48'-linked polyubiquitination. This chain is Ubiquitin-conjugating enzyme E2 S (UBE2S), found in Homo sapiens (Human).